A 70-amino-acid polypeptide reads, in one-letter code: Small ribosomal subunit protein bS21 (70 aa).

The protein belongs to the bacterial ribosomal protein bS21 family.

The protein is Small ribosomal subunit protein bS21 of Paracidovorax citrulli (strain AAC00-1) (Acidovorax citrulli).